A 203-amino-acid polypeptide reads, in one-letter code: Guanylate kinase (203 aa).

The Guanylate kinase-like domain occupies 3–181 (GTLYIVSAPS…ALDDLKAIFR (179 aa)). 10-17 (APSGAGKT) is an ATP binding site.

The protein belongs to the guanylate kinase family.

The protein resides in the cytoplasm. It carries out the reaction GMP + ATP = GDP + ADP. In terms of biological role, essential for recycling GMP and indirectly, cGMP. The sequence is that of Guanylate kinase (gmk) from Pseudomonas aeruginosa (strain ATCC 15692 / DSM 22644 / CIP 104116 / JCM 14847 / LMG 12228 / 1C / PRS 101 / PAO1).